A 184-amino-acid polypeptide reads, in one-letter code: C-phycoerythrin class 1 subunit beta (184 aa).

2 residues coordinate (2R,3E)-phycoerythrobilin: C50 and C61. At N72 the chain carries N4-methylasparagine. Positions 82 and 165 each coordinate (2R,3E)-phycoerythrobilin.

Belongs to the phycobiliprotein family. Heterodimer of an alpha and a beta chain. Contains three covalently linked bilin chromophores.

It is found in the cellular thylakoid membrane. Functionally, light-harvesting photosynthetic bile pigment-protein from the phycobiliprotein complex. This Synechococcus sp. (strain WH7803) protein is C-phycoerythrin class 1 subunit beta (cpeB).